The following is an 89-amino-acid chain: Small ribosomal subunit protein uS15 (89 aa).

The span at methionine 1–glutamate 10 shows a compositional bias: basic and acidic residues. Residues methionine 1–threonine 22 form a disordered region. The segment covering leucine 11–threonine 22 has biased composition (polar residues).

This sequence belongs to the universal ribosomal protein uS15 family. As to quaternary structure, part of the 30S ribosomal subunit. Forms a bridge to the 50S subunit in the 70S ribosome, contacting the 23S rRNA.

In terms of biological role, one of the primary rRNA binding proteins, it binds directly to 16S rRNA where it helps nucleate assembly of the platform of the 30S subunit by binding and bridging several RNA helices of the 16S rRNA. Functionally, forms an intersubunit bridge (bridge B4) with the 23S rRNA of the 50S subunit in the ribosome. This Synechococcus sp. (strain RCC307) protein is Small ribosomal subunit protein uS15.